Reading from the N-terminus, the 400-residue chain is Large envelope protein (400 aa).

M1 bears the N-acetylmethionine mark. G2 is lipidated: N-myristoyl glycine; by host. Residues 2 to 119 (GGWSSKPRKG…PPLRDTHPQA (118 aa)) form a pre-S1 region. Residues 2–174 (GGWSSKPRKG…LSKTGDPVPN (173 aa)) form a pre-S region. Over 2–181 (GGWSSKPRKG…VPNMENISSG (180 aa)) the chain is Virion surface; in external conformation. The Intravirion; in internal conformation portion of the chain corresponds to 2 to 253 (GGWSSKPRKG…PGYRWMCLRR (252 aa)). Residue W4 is glycosylated (N-linked (GlcNAc...) asparagine). Disordered stretches follow at residues 29 to 50 (QLDP…PHKD) and 85 to 118 (LTTV…THPQ). Residues 96-106 (STSRQSGRQPT) are compositionally biased toward polar residues. A pre-S2 region spans residues 120–174 (MQWNSTTFHQTLQDPRVRALYFPAGGSSSGTVSPAQNTVSAISSTLSKTGDPVPN). The chain crosses the membrane as a helical span at residues 182 to 202 (LLGPLLVLQAGFFLLTKILTI). Residues 203–253 (PQSLDSWWTSLNFLGQTPVCLGQNSQSQISSHSLTCCPPICPGYRWMCLRR) lie on the Intravirion; in external conformation side of the membrane. A helical transmembrane segment spans residues 254–274 (FIIFLCILLLCLIFLLVLLDC). At 275 to 348 (QGMLPVCPLI…WASVRFSWLS (74 aa)) the chain is on the virion surface side. N-linked (GlcNAc...) asparagine; by host glycosylation occurs at N320. Residues 349 to 369 (LLVPFVQWFVGLSPTVWLSVI) traverse the membrane as a helical segment. At 370 to 375 (WMMWFW) the chain is on the intravirion side. Residues 376 to 398 (GPSLCNILSPFMPLLPIFFCLWV) form a helical membrane-spanning segment. The Virion surface segment spans residues 399-400 (YI).

This sequence belongs to the orthohepadnavirus major surface antigen family. In terms of assembly, interacts (via its myristoylated pre-S1 region) with the host SLC10A1/NTCP; this interaction is essential for viral entry. As to quaternary structure, in its internal form (Li-HBsAg), interacts with the capsid protein and with the isoform S. Interacts with host chaperone CANX. Associates with host chaperone CANX through its pre-S2 N glycan; this association may be essential for isoform M proper secretion. In terms of assembly, interacts with isoform L. Interacts with the antigens of satellite virus HDV (HDVAgs); this interaction is required for encapsidation of HDV genomic RNA. In terms of processing, isoform M is N-terminally acetylated by host at a ratio of 90%, and N-glycosylated by host at the pre-S2 region. Post-translationally, myristoylated; this modification is essential for its interaction with the host protein SLC10A1/NTCP.

The protein resides in the virion membrane. Functionally, the large envelope protein exists in two topological conformations, one which is termed 'external' or Le-HBsAg and the other 'internal' or Li-HBsAg. In its external conformation the protein attaches the virus to cell receptors and thereby initiating infection. This interaction determines the species specificity and liver tropism. This attachment induces virion internalization predominantly through caveolin-mediated endocytosis. The large envelope protein also assures fusion between virion membrane and endosomal membrane. In its internal conformation the protein plays a role in virion morphogenesis and mediates the contact with the nucleocapsid like a matrix protein. The middle envelope protein plays an important role in the budding of the virion. It is involved in the induction of budding in a nucleocapsid independent way. In this process the majority of envelope proteins bud to form subviral lipoprotein particles of 22 nm of diameter that do not contain a nucleocapsid. This Homo sapiens (Human) protein is Large envelope protein.